Consider the following 92-residue polypeptide: Calitoxin (92 aa).

A signal peptide spans M1 to S20. Positions R21–A42 are excised as a propeptide. 3 disulfides stabilise this stretch: C47/C86, C49/C77, and C67/C87.

The protein belongs to the sea anemone sodium channel inhibitory toxin family. Expressed both outside and in acontia, a specialised envenomation structure laden with batteries of venom-containing nematocysts found only in the superfamily Metridioidea.

Its subcellular location is the secreted. It localises to the nematocyst. Functionally, in neuromuscular preparation of crustaceans, the toxin increased neurotransmitter release, causing repetitive firing of the axons. May affect sodium channels (Nav). The chain is Calitoxin from Calliactis polypus (Hermit crab anemone).